The following is a 350-amino-acid chain: Ketol-acid reductoisomerase (NADP(+)) (350 aa).

Residues 4–187 (VSITTDYSRM…GGARANIIKT (184 aa)) enclose the KARI N-terminal Rossmann domain. Residues 30–33 (YGSQ), Arg-53, Thr-58, and 88–91 (DMVQ) contribute to the NADP(+) site. His-113 is a catalytic residue. Gly-139 contributes to the NADP(+) binding site. One can recognise a KARI C-terminal knotted domain in the interval 188-333 (TFKEETETDL…KQLRAKMVWL (146 aa)). 4 residues coordinate Mg(2+): Asp-196, Glu-200, Glu-232, and Glu-236. Residue Ser-257 participates in substrate binding.

This sequence belongs to the ketol-acid reductoisomerase family. The cofactor is Mg(2+).

The catalysed reaction is (2R)-2,3-dihydroxy-3-methylbutanoate + NADP(+) = (2S)-2-acetolactate + NADPH + H(+). The enzyme catalyses (2R,3R)-2,3-dihydroxy-3-methylpentanoate + NADP(+) = (S)-2-ethyl-2-hydroxy-3-oxobutanoate + NADPH + H(+). The protein operates within amino-acid biosynthesis; L-isoleucine biosynthesis; L-isoleucine from 2-oxobutanoate: step 2/4. It participates in amino-acid biosynthesis; L-valine biosynthesis; L-valine from pyruvate: step 2/4. Its function is as follows. Involved in the biosynthesis of branched-chain amino acids (BCAA). Catalyzes an alkyl-migration followed by a ketol-acid reduction of (S)-2-acetolactate (S2AL) to yield (R)-2,3-dihydroxy-isovalerate. In the isomerase reaction, S2AL is rearranged via a Mg-dependent methyl migration to produce 3-hydroxy-3-methyl-2-ketobutyrate (HMKB). In the reductase reaction, this 2-ketoacid undergoes a metal-dependent reduction by NADPH to yield (R)-2,3-dihydroxy-isovalerate. The protein is Ketol-acid reductoisomerase (NADP(+)) of Xylella fastidiosa (strain Temecula1 / ATCC 700964).